A 338-amino-acid polypeptide reads, in one-letter code: tRNA methyltransferase 10 homolog A (338 aa).

Disordered regions lie at residues 1–91 and 296–338; these read MSSE…DRKR and RVEG…SVPH. The residue at position 22 (Ser22) is a Phosphoserine. The stretch at 52–80 forms a coiled coil; the sequence is KQWEEQRELRKQKRKEKRKRKQLERQCQP. The span at 61-73 shows a compositional bias: basic residues; the sequence is RKQKRKEKRKRKQ. In terms of domain architecture, SAM-dependent MTase TRM10-type spans 88–279; that stretch reads DRKRIRRDVV…TILPQRKGAV (192 aa). A compositionally biased stretch (basic and acidic residues) spans 308 to 328; that stretch reads EENRHELDSTHEEEKQDKENS. Over residues 329–338 the composition is skewed to polar residues; that stretch reads TESTVNSVPH. Ser335 is modified (phosphoserine).

This sequence belongs to the class IV-like SAM-binding methyltransferase superfamily. TRM10 family. In terms of assembly, interacts with tRNA.

The protein resides in the nucleus. The protein localises to the nucleolus. It catalyses the reaction guanosine(9) in tRNA + S-adenosyl-L-methionine = N(1)-methylguanosine(9) in tRNA + S-adenosyl-L-homocysteine + H(+). S-adenosyl-L-methionine-dependent guanine N(1)-methyltransferase that catalyzes the formation of N(1)-methylguanine at position 9 (m1G9) in tRNAs. Probably not able to catalyze formation of N(1)-methyladenine at position 9 (m1A9) in tRNAs. In Bos taurus (Bovine), this protein is tRNA methyltransferase 10 homolog A (TRMT10A).